The primary structure comprises 513 residues: Na(+)/H(+) antiporter NhaB (513 aa).

The next 12 helical transmembrane spans lie at 23–43 (LALI…PFVA), 52–72 (IFTL…LLAI), 97–117 (LLLM…LFIF), 120–140 (LLLS…AAAF), 144–164 (FLDA…FYGI), 202–222 (LMMH…VGEP), 238–258 (FFLR…LTCL), 303–323 (AIIG…VGLI), 348–368 (TESL…AVII), 391–411 (LFYI…VGTI), 447–467 (ATPN…APLI), and 475–495 (VWMA…CVEF).

Belongs to the NhaB Na(+)/H(+) (TC 2.A.34) antiporter family.

It localises to the cell inner membrane. The enzyme catalyses 2 Na(+)(in) + 3 H(+)(out) = 2 Na(+)(out) + 3 H(+)(in). In terms of biological role, na(+)/H(+) antiporter that extrudes sodium in exchange for external protons. The protein is Na(+)/H(+) antiporter NhaB of Escherichia coli O6:K15:H31 (strain 536 / UPEC).